The following is a 43-amino-acid chain: Defensin-B (43 aa).

Disulfide bonds link C3/C34, C20/C39, and C24/C41.

It localises to the secreted. In terms of biological role, antibacterial protein. Strong activity against the Gram-positive bacteria M.luteus, B.megaterium and S.aureus. Reduced activity against Gram-positive bacterium B.subtilis and weak activity against Gram-negative bacterium X.japonicus. No detectable activity against the Gram-negative bacteria E.asbriae, E.coli, P.aeruginosa and S.marcescens. This is Defensin-B from Anomala cuprea (Cupreous chafer beetle).